The chain runs to 486 residues: Maternal protein exuperantia (486 aa).

Disordered regions lie at residues 202 to 233 (NARV…RDEF) and 386 to 477 (STIR…ISLP). Over residues 218-233 (ADKHVKNGLQKERDEF) the composition is skewed to basic and acidic residues. Residues 387 to 397 (TIRRRNKRNTP) are compositionally biased toward basic residues. Composition is skewed to polar residues over residues 420-437 (KSQS…TPSP) and 464-476 (SALN…SISL).

Functionally, ensures the proper localization of the mRNA of the bicoid gene to the anterior regions of the oocyte thus playing a fundamental role in the establishment of the polarity of the oocyte. May bind the bcd mRNA. The chain is Maternal protein exuperantia (exu) from Drosophila virilis (Fruit fly).